The chain runs to 89 residues: Small ribosomal subunit protein uS17 (89 aa).

This sequence belongs to the universal ribosomal protein uS17 family. Part of the 30S ribosomal subunit.

One of the primary rRNA binding proteins, it binds specifically to the 5'-end of 16S ribosomal RNA. The chain is Small ribosomal subunit protein uS17 from Paracidovorax citrulli (strain AAC00-1) (Acidovorax citrulli).